We begin with the raw amino-acid sequence, 581 residues long: Probable bifunctional SAT/APS kinase 2 (581 aa).

Residues 1–200 (MSGFVVWFTG…AAGGARGLIA (200 aa)) form an adenylsulfate kinase region. 10 to 17 (GLSGAGKS) provides a ligand contact to ATP. Serine 84 (phosphoserine intermediate) is an active-site residue. Residues 201-581 (PHGGELVNRW…ILIESMRSSS (381 aa)) are sulfate adenylyltransferase.

In the N-terminal section; belongs to the APS kinase family. This sequence in the C-terminal section; belongs to the sulfate adenylyltransferase family.

The catalysed reaction is sulfate + ATP + H(+) = adenosine 5'-phosphosulfate + diphosphate. The enzyme catalyses adenosine 5'-phosphosulfate + ATP = 3'-phosphoadenylyl sulfate + ADP + H(+). It functions in the pathway sulfur metabolism; hydrogen sulfide biosynthesis; sulfite from sulfate: step 1/3. It participates in sulfur metabolism; hydrogen sulfide biosynthesis; sulfite from sulfate: step 2/3. In Sorangium cellulosum (strain So ce56) (Polyangium cellulosum (strain So ce56)), this protein is Probable bifunctional SAT/APS kinase 2 (sat2/cysC2).